Here is a 415-residue protein sequence, read N- to C-terminus: Dihydroorotase (415 aa).

Zn(2+) is bound by residues histidine 54 and histidine 56. Substrate is bound by residues histidine 56–arginine 58 and asparagine 88. Zn(2+)-binding residues include lysine 136, histidine 169, histidine 217, and aspartate 278. Position 136 is an N6-carboxylysine (lysine 136). Residue aspartate 278 is part of the active site. Substrate is bound at residue histidine 282.

This sequence belongs to the metallo-dependent hydrolases superfamily. DHOase family. Class I DHOase subfamily. Zn(2+) is required as a cofactor.

It catalyses the reaction (S)-dihydroorotate + H2O = N-carbamoyl-L-aspartate + H(+). Its pathway is pyrimidine metabolism; UMP biosynthesis via de novo pathway; (S)-dihydroorotate from bicarbonate: step 3/3. Its function is as follows. Catalyzes the reversible cyclization of carbamoyl aspartate to dihydroorotate. The polypeptide is Dihydroorotase (Thermoplasma volcanium (strain ATCC 51530 / DSM 4299 / JCM 9571 / NBRC 15438 / GSS1)).